The chain runs to 336 residues: Phospho-N-acetylmuramoyl-pentapeptide-transferase (336 aa).

10 consecutive transmembrane segments (helical) span residues 3-23 (LTLIAAIISFMVSAFTMPYFI), 53-73 (GGTVFLLVATAVSLLVSLFSI), 78-98 (SLALISGILSIVVIYGIIGFL), 118-138 (LALQLAGGLMFYFLHVSPSGI), 143-163 (VFGYQLSLGIFYLFFVLFWVV), 174-194 (GIDGLASISVVISLVTYGVIA), 200-220 (FDVLLLIGTMIGALLGFFCFN), 226-246 (VFMGDVGSLALGAMLAAISIA), 251-271 (WTLLIIGIVYVLETSSVMLQV), and 316-336 (AFLWGVGSLASLLVLAILYVF).

It belongs to the glycosyltransferase 4 family. MraY subfamily. The cofactor is Mg(2+).

Its subcellular location is the cell membrane. It carries out the reaction UDP-N-acetyl-alpha-D-muramoyl-L-alanyl-gamma-D-glutamyl-L-lysyl-D-alanyl-D-alanine + di-trans,octa-cis-undecaprenyl phosphate = Mur2Ac(oyl-L-Ala-gamma-D-Glu-L-Lys-D-Ala-D-Ala)-di-trans,octa-cis-undecaprenyl diphosphate + UMP. It functions in the pathway cell wall biogenesis; peptidoglycan biosynthesis. Functionally, catalyzes the initial step of the lipid cycle reactions in the biosynthesis of the cell wall peptidoglycan: transfers peptidoglycan precursor phospho-MurNAc-pentapeptide from UDP-MurNAc-pentapeptide onto the lipid carrier undecaprenyl phosphate, yielding undecaprenyl-pyrophosphoryl-MurNAc-pentapeptide, known as lipid I. The polypeptide is Phospho-N-acetylmuramoyl-pentapeptide-transferase (Streptococcus pyogenes serotype M4 (strain MGAS10750)).